The following is a 371-amino-acid chain: DNA replication and repair protein RecF (371 aa).

30–37 contributes to the ATP binding site; the sequence is GPNAQGKT.

The protein belongs to the RecF family.

The protein localises to the cytoplasm. Its function is as follows. The RecF protein is involved in DNA metabolism; it is required for DNA replication and normal SOS inducibility. RecF binds preferentially to single-stranded, linear DNA. It also seems to bind ATP. This is DNA replication and repair protein RecF from Desulforamulus reducens (strain ATCC BAA-1160 / DSM 100696 / MI-1) (Desulfotomaculum reducens).